Here is a 307-residue protein sequence, read N- to C-terminus: Alpha N-terminal protein methyltransferase 1 (307 aa).

Low complexity predominate over residues 38–54; sequence EPAPAPAAGSNGVAGEQ. A disordered region spans residues 38-60; it reads EPAPAPAAGSNGVAGEQEAGGGG. Residues Gly123, Arg128, 145–147, 179–180, and Gln195 each bind S-adenosyl-L-methionine; these read EPV and LQ.

The protein belongs to the methyltransferase superfamily. NTM1 family.

It catalyses the reaction N-terminal L-alanyl-L-prolyl-L-lysyl-[protein] + 3 S-adenosyl-L-methionine = N-terminal N,N,N-trimethyl-L-alanyl-L-prolyl-L-lysyl-[protein] + 3 S-adenosyl-L-homocysteine + 3 H(+). It carries out the reaction N-terminal L-seryl-L-prolyl-L-lysyl-[protein] + 3 S-adenosyl-L-methionine = N-terminal N,N,N-trimethyl-L-seryl-L-prolyl-L-lysyl-[protein] + 3 S-adenosyl-L-homocysteine + 3 H(+). The catalysed reaction is N-terminal L-prolyl-L-prolyl-L-lysyl-[protein] + 2 S-adenosyl-L-methionine = N-terminal N,N-dimethyl-L-prolyl-L-prolyl-L-lysyl-[protein] + 2 S-adenosyl-L-homocysteine + 2 H(+). Its function is as follows. Alpha-N-methyltransferase that methylates the N-terminus of target proteins containing the N-terminal motif [Ala/Pro/Ser]-Pro-Lys when the initiator Met is cleaved. Specifically catalyzes mono-, di- or tri-methylation of exposed alpha-amino group of Ala or Ser residue in the [Ala/Ser]-Pro-Lys motif and mono- or di-methylation of Pro in the Pro-Pro-Lys motif. This is Alpha N-terminal protein methyltransferase 1 from Oryza sativa subsp. indica (Rice).